The following is a 954-amino-acid chain: Glycine dehydrogenase (decarboxylating) (954 aa).

N6-(pyridoxal phosphate)lysine is present on lysine 704.

This sequence belongs to the GcvP family. In terms of assembly, the glycine cleavage system is composed of four proteins: P, T, L and H. Pyridoxal 5'-phosphate is required as a cofactor.

It catalyses the reaction N(6)-[(R)-lipoyl]-L-lysyl-[glycine-cleavage complex H protein] + glycine + H(+) = N(6)-[(R)-S(8)-aminomethyldihydrolipoyl]-L-lysyl-[glycine-cleavage complex H protein] + CO2. Its function is as follows. The glycine cleavage system catalyzes the degradation of glycine. The P protein binds the alpha-amino group of glycine through its pyridoxal phosphate cofactor; CO(2) is released and the remaining methylamine moiety is then transferred to the lipoamide cofactor of the H protein. The chain is Glycine dehydrogenase (decarboxylating) from Vibrio parahaemolyticus serotype O3:K6 (strain RIMD 2210633).